Here is a 122-residue protein sequence, read N- to C-terminus: RING-box protein 1B (122 aa).

Positions 1 to 23 (MAEEIEVEETEDFHDMDFNDEEP) are enriched in acidic residues. A disordered region spans residues 1–28 (MAEEIEVEETEDFHDMDFNDEEPSCSGG). 11 residues coordinate Zn(2+): C57, C60, C68, C71, C82, C89, H91, H94, H96, C108, and D111. The segment at 57-112 (CAICRNHIMNLCIECQADPNANQDECTVAWGECNHAFHYHCIARWLKTRLVCPLDN) adopts an RING-type zinc-finger fold.

This sequence belongs to the RING-box family. In terms of assembly, part of a SCF complex consisting of Skpa (SKP1), Cul1, Roc1B and a F-box protein. In terms of tissue distribution, highly expressed in early embryos, and in pupae. Widely expressed in adult males, while it is weakly expressed in adult females.

It is found in the cytoplasm. The protein resides in the nucleus. It functions in the pathway protein modification; protein ubiquitination. Its function is as follows. Component of the SCF (SKP1-CUL1-F-box protein) E3 ubiquitin ligase complex, which mediates the ubiquitination and subsequent proteasomal degradation of target proteins. Through the RING-type zinc finger, seems to recruit the E2 ubiquitination enzyme to the complex and brings it into close proximity to the substrate. The protein is RING-box protein 1B (Roc1b) of Drosophila melanogaster (Fruit fly).